A 312-amino-acid polypeptide reads, in one-letter code: Ribonuclease HIII (312 aa).

The region spanning 95–311 (FNCIGSDEAG…REKAQKILKP (217 aa)) is the RNase H type-2 domain. 3 residues coordinate a divalent metal cation: D101, E102, and D206.

This sequence belongs to the RNase HII family. RnhC subfamily. The cofactor is Mn(2+). It depends on Mg(2+) as a cofactor.

It is found in the cytoplasm. It carries out the reaction Endonucleolytic cleavage to 5'-phosphomonoester.. In terms of biological role, endonuclease that specifically degrades the RNA of RNA-DNA hybrids. The chain is Ribonuclease HIII from Staphylococcus aureus (strain Mu3 / ATCC 700698).